Here is a 91-residue protein sequence, read N- to C-terminus: Small ribosomal subunit protein bS6 (91 aa).

The protein belongs to the bacterial ribosomal protein bS6 family.

Functionally, binds together with bS18 to 16S ribosomal RNA. The protein is Small ribosomal subunit protein bS6 of Leptospira interrogans serogroup Icterohaemorrhagiae serovar copenhageni (strain Fiocruz L1-130).